The primary structure comprises 1828 residues: Protein TIC 214 (1828 aa).

The next 6 helical transmembrane spans lie at 18–38 (IINSVVVVGLYYGFLTTFSIG), 64–84 (FITGQLMIFISIYYAPLHLAM), 87–107 (PYTITVLGLPYLLFHFFWKNH), 124–144 (FSIQSIFLNNFIFQLLNHFVL), 172–192 (VGWLIGHILFMKWVGLILFWI), and 222–242 (VNIFLFITCVYYLGRIPSPIL). Positions 270 to 279 (SEAKETKQEQ) are enriched in basic and acidic residues. Disordered stretches follow at residues 270-301 (SEAKETKQEQKGSFAEEDSSLGSEEREDPNKL), 618-637 (DLQQQERENEEESTEDHAIR), 741-763 (EFKTSNSDEKETKEKEKKREDKK), and 1533-1571 (KEEFGQGNLGSDTQNQQKDVEKDYAKSDIKKRGKKRQSK). The segment covering 1550 to 1562 (KDVEKDYAKSDIK) has biased composition (basic and acidic residues).

The protein belongs to the TIC214 family. As to quaternary structure, part of the Tic complex.

It is found in the plastid. The protein localises to the chloroplast inner membrane. Functionally, involved in protein precursor import into chloroplasts. May be part of an intermediate translocation complex acting as a protein-conducting channel at the inner envelope. This chain is Protein TIC 214, found in Calycanthus floridus var. glaucus (Eastern sweetshrub).